The primary structure comprises 559 residues: Apolipoprotein N-acyltransferase 2 (559 aa).

Helical transmembrane passes span 27–47, 53–73, 86–106, 114–134, 153–173, and 187–207; these read LAGS…GFLL, HVAC…SFWL, ASTV…ACIL, ACAF…GILA, IADI…NACV, and VPVF…SLYG. Positions 221–507 constitute a CN hydrolase domain; that stretch reads LALAIVQQNA…SAVLHVPVYP (287 aa). The Proton acceptor role is filled by E288. Residue K358 is part of the active site. C416 (nucleophile) is an active-site residue. The helical transmembrane segment at 519-539 threads the bilayer; it reads WVIVLCALIFFAEGVRMAVHT.

The protein belongs to the CN hydrolase family. Apolipoprotein N-acyltransferase subfamily.

It localises to the cell inner membrane. The enzyme catalyses N-terminal S-1,2-diacyl-sn-glyceryl-L-cysteinyl-[lipoprotein] + a glycerophospholipid = N-acyl-S-1,2-diacyl-sn-glyceryl-L-cysteinyl-[lipoprotein] + a 2-acyl-sn-glycero-3-phospholipid + H(+). It participates in protein modification; lipoprotein biosynthesis (N-acyl transfer). In terms of biological role, catalyzes the phospholipid dependent N-acylation of the N-terminal cysteine of apolipoprotein, the last step in lipoprotein maturation. This Treponema pallidum (strain Nichols) protein is Apolipoprotein N-acyltransferase 2.